The chain runs to 201 residues: Superoxide dismutase [Mn] (201 aa).

Residues H27, H81, D163, and H167 each coordinate Mn(2+).

It belongs to the iron/manganese superoxide dismutase family. In terms of assembly, homodimer. The cofactor is Mn(2+).

Its subcellular location is the secreted. The catalysed reaction is 2 superoxide + 2 H(+) = H2O2 + O2. Functionally, destroys superoxide anion radicals which are normally produced within the cells and which are toxic to biological systems. In Streptococcus pyogenes serotype M6 (strain ATCC BAA-946 / MGAS10394), this protein is Superoxide dismutase [Mn] (sodA).